The sequence spans 206 residues: Large ribosomal subunit protein bL25 (206 aa).

The protein belongs to the bacterial ribosomal protein bL25 family. CTC subfamily. As to quaternary structure, part of the 50S ribosomal subunit; part of the 5S rRNA/L5/L18/L25 subcomplex. Contacts the 5S rRNA. Binds to the 5S rRNA independently of L5 and L18.

This is one of the proteins that binds to the 5S RNA in the ribosome where it forms part of the central protuberance. This Ralstonia nicotianae (strain ATCC BAA-1114 / GMI1000) (Ralstonia solanacearum) protein is Large ribosomal subunit protein bL25.